A 665-amino-acid chain; its full sequence is Macrolide export ATP-binding/permease protein MacB (665 aa).

The region spanning 17–255 is the ABC transporter domain; it reads MQVKGLIREF…VAQFSSIIDK (239 aa). 53-60 serves as a coordination point for ATP; the sequence is GQSGSGKS. Helical transmembrane passes span 287–307, 544–564, 588–608, and 630–650; these read LLTM…VGLG, IAII…LVSV, FLIE…GMAF, and SIIA…FLPA.

This sequence belongs to the ABC transporter superfamily. Macrolide exporter (TC 3.A.1.122) family. As to quaternary structure, homodimer. Part of the tripartite efflux system MacAB-TolC, which is composed of an inner membrane transporter, MacB, a periplasmic membrane fusion protein, MacA, and an outer membrane component, TolC. The complex forms a large protein conduit and can translocate molecules across both the inner and outer membranes. Interacts with MacA.

It localises to the cell inner membrane. Part of the tripartite efflux system MacAB-TolC. MacB is a non-canonical ABC transporter that contains transmembrane domains (TMD), which form a pore in the inner membrane, and an ATP-binding domain (NBD), which is responsible for energy generation. Confers resistance against macrolides. The sequence is that of Macrolide export ATP-binding/permease protein MacB from Psychrobacter arcticus (strain DSM 17307 / VKM B-2377 / 273-4).